The sequence spans 117 residues: Large ribosomal subunit protein uL18 (117 aa).

The protein belongs to the universal ribosomal protein uL18 family. In terms of assembly, part of the 50S ribosomal subunit; part of the 5S rRNA/L5/L18/L25 subcomplex. Contacts the 5S and 23S rRNAs.

Functionally, this is one of the proteins that bind and probably mediate the attachment of the 5S RNA into the large ribosomal subunit, where it forms part of the central protuberance. This is Large ribosomal subunit protein uL18 from Thioalkalivibrio sulfidiphilus (strain HL-EbGR7).